The following is a 775-amino-acid chain: Homoaconitase, mitochondrial (775 aa).

The transit peptide at 1–29 (MQSRLMPSGGPGRRWAFLRVPSTPQRRAF) directs the protein to the mitochondrion. Residues C392, C461, and C464 each coordinate [4Fe-4S] cluster.

Belongs to the aconitase/IPM isomerase family. The cofactor is [4Fe-4S] cluster.

It localises to the mitochondrion. It catalyses the reaction (2R,3S)-homoisocitrate = cis-homoaconitate + H2O. The protein operates within amino-acid biosynthesis; L-lysine biosynthesis via AAA pathway; L-alpha-aminoadipate from 2-oxoglutarate: step 3/5. Catalyzes the reversible hydration of cis-homoaconitate to (2R,3S)-homoisocitrate, a step in the alpha-aminoadipate pathway for lysine biosynthesis. This Aspergillus oryzae (strain ATCC 42149 / RIB 40) (Yellow koji mold) protein is Homoaconitase, mitochondrial (lys4).